The following is a 289-amino-acid chain: Ribosomal RNA small subunit methyltransferase A (289 aa).

Residues Asn21, Leu23, Gly48, Glu69, Asp94, and Asn120 each contribute to the S-adenosyl-L-methionine site.

It belongs to the class I-like SAM-binding methyltransferase superfamily. rRNA adenine N(6)-methyltransferase family. RsmA subfamily.

The protein localises to the cytoplasm. The catalysed reaction is adenosine(1518)/adenosine(1519) in 16S rRNA + 4 S-adenosyl-L-methionine = N(6)-dimethyladenosine(1518)/N(6)-dimethyladenosine(1519) in 16S rRNA + 4 S-adenosyl-L-homocysteine + 4 H(+). Its function is as follows. Specifically dimethylates two adjacent adenosines (A1518 and A1519) in the loop of a conserved hairpin near the 3'-end of 16S rRNA in the 30S particle. May play a critical role in biogenesis of 30S subunits. The protein is Ribosomal RNA small subunit methyltransferase A of Actinobacillus pleuropneumoniae serotype 5b (strain L20).